A 271-amino-acid polypeptide reads, in one-letter code: Undecaprenyl-diphosphatase (271 aa).

8 helical membrane passes run 5-25 (YALF…FLPV), 45-65 (AATF…AVFW), 86-106 (TLSL…GLGI), 114-134 (LFGP…LIIA), 149-169 (ISYK…WPGF), 189-209 (AAEF…GLDL), 226-246 (VGFI…LALI), and 251-271 (FIPF…VFVA).

Belongs to the UppP family.

Its subcellular location is the cell inner membrane. The catalysed reaction is di-trans,octa-cis-undecaprenyl diphosphate + H2O = di-trans,octa-cis-undecaprenyl phosphate + phosphate + H(+). Catalyzes the dephosphorylation of undecaprenyl diphosphate (UPP). Confers resistance to bacitracin. The sequence is that of Undecaprenyl-diphosphatase from Aeromonas salmonicida (strain A449).